A 156-amino-acid chain; its full sequence is Transcription elongation factor GreA (156 aa).

A coiled-coil region spans residues 1-32 (MKKVRLTREGYEKLKQELEELKRKFMYEISER).

Belongs to the GreA/GreB family.

In terms of biological role, necessary for efficient RNA polymerase transcription elongation past template-encoded arresting sites. The arresting sites in DNA have the property of trapping a certain fraction of elongating RNA polymerases that pass through, resulting in locked ternary complexes. Cleavage of the nascent transcript by cleavage factors such as GreA or GreB allows the resumption of elongation from the new 3'terminus. GreA releases sequences of 2 to 3 nucleotides. The sequence is that of Transcription elongation factor GreA from Thermotoga neapolitana (strain ATCC 49049 / DSM 4359 / NBRC 107923 / NS-E).